A 459-amino-acid polypeptide reads, in one-letter code: Glutamate--isopropylamine ligase (459 aa).

A GS beta-grasp domain is found at 19-115; it reads HNIDTIRLGA…VLCDIQHLNG (97 aa). In terms of domain architecture, GS catalytic spans 122 to 459; the sequence is PRNLLRKAIE…WELARYLDII (338 aa).

This sequence belongs to the glutamine synthetase family.

The enzyme catalyses isopropylamine + L-glutamate + ATP = gamma-L-glutamyl-isopropylamide + ADP + phosphate + H(+). Its function is as follows. Involved in the degradation of isopropylamine, which is a constituent of the herbicides atrazine. Catalyzes the ATP-dependent formation of gamma-glutamyl-isopropylamide from isopropylamine and L-glutamate. It can also use aminoalkanes, amino-alcohols (L-alaninol and D-alaninol) and amino-esters as substrates. The polypeptide is Glutamate--isopropylamine ligase (ipuC) (Pseudomonas sp).